We begin with the raw amino-acid sequence, 470 residues long: UDP-N-acetylmuramate--L-alanine ligase (470 aa).

118-124 (GTHGKTT) lines the ATP pocket.

The protein belongs to the MurCDEF family.

Its subcellular location is the cytoplasm. It catalyses the reaction UDP-N-acetyl-alpha-D-muramate + L-alanine + ATP = UDP-N-acetyl-alpha-D-muramoyl-L-alanine + ADP + phosphate + H(+). The protein operates within cell wall biogenesis; peptidoglycan biosynthesis. Cell wall formation. This is UDP-N-acetylmuramate--L-alanine ligase from Cereibacter sphaeroides (strain ATCC 17025 / ATH 2.4.3) (Rhodobacter sphaeroides).